Here is a 945-residue protein sequence, read N- to C-terminus: Glutamyl aminopeptidase (945 aa).

Over 1–18 the chain is Cytoplasmic; it reads MNFAEEEPSKKYCIKGKH. A helical; Signal-anchor for type II membrane protein membrane pass occupies residues 19-39; sequence VAIICGVVVAVGLIVGLSVGL. The Extracellular segment spans residues 40–945; that stretch reads TRSCEQDTTP…SIREWFASLP (906 aa). Residues 43-77 form a disordered region; the sequence is CEQDTTPAPSQPPPEASTALPPQDQNVCPDSEDES. Residues Asn116 and Asn189 are each glycosylated (N-linked (GlcNAc...) asparagine). Glu215 serves as a coordination point for substrate. An N-linked (GlcNAc...) asparagine glycan is attached at Asn316. A substrate-binding site is contributed by 349–353; it reads GAMEN. Residue His385 coordinates Zn(2+). Catalysis depends on Glu386, which acts as the Proton acceptor. 2 residues coordinate Zn(2+): His389 and Glu408. N-linked (GlcNAc...) asparagine glycosylation is found at Asn546, Asn601, Asn637, Asn669, Asn754, and Asn792. Arg878 serves as a coordination point for substrate.

This sequence belongs to the peptidase M1 family. Homodimer; disulfide-linked. Requires Zn(2+) as cofactor. Early B-lineage cells and certain stromal cell of hemopoietic tissues. Also expressed by capillary endothelial cells, placenta, and epithelial cells of the intestine and proximal renal tubules.

Its subcellular location is the cell membrane. It carries out the reaction Release of N-terminal glutamate (and to a lesser extent aspartate) from a peptide.. With respect to regulation, substrate specificity is modulated by calcium which enhances the enzymatic activity for cleavage of acidic residues while reducing its activity with basic residues. Inhibited by aminopeptidase inhibitors amastatin and bestatin. Its function is as follows. Regulates central hypertension through its calcium-modulated preference to cleave N-terminal acidic residues from peptides such as angiotensin II. This chain is Glutamyl aminopeptidase (Enpep), found in Mus musculus (Mouse).